Reading from the N-terminus, the 471-residue chain is ATP synthase subunit beta (471 aa).

Position 154-161 (154-161 (GGAGVGKT)) interacts with ATP.

The protein belongs to the ATPase alpha/beta chains family. F-type ATPases have 2 components, CF(1) - the catalytic core - and CF(0) - the membrane proton channel. CF(1) has five subunits: alpha(3), beta(3), gamma(1), delta(1), epsilon(1). CF(0) has three main subunits: a(1), b(2) and c(9-12). The alpha and beta chains form an alternating ring which encloses part of the gamma chain. CF(1) is attached to CF(0) by a central stalk formed by the gamma and epsilon chains, while a peripheral stalk is formed by the delta and b chains.

It is found in the cell membrane. It carries out the reaction ATP + H2O + 4 H(+)(in) = ADP + phosphate + 5 H(+)(out). In terms of biological role, produces ATP from ADP in the presence of a proton gradient across the membrane. The catalytic sites are hosted primarily by the beta subunits. This is ATP synthase subunit beta from Mesomycoplasma hyopneumoniae (strain 232) (Mycoplasma hyopneumoniae).